A 912-amino-acid chain; its full sequence is Protein translocase subunit SecA (912 aa).

Residues Q87, 105 to 109 (GEGKT), and D499 each bind ATP. 4 residues coordinate Zn(2+): C897, C899, C908, and H909.

The protein belongs to the SecA family. As to quaternary structure, monomer and homodimer. Part of the essential Sec protein translocation apparatus which comprises SecA, SecYEG and auxiliary proteins SecDF-YajC and YidC. It depends on Zn(2+) as a cofactor.

Its subcellular location is the cell inner membrane. It is found in the cytoplasm. The enzyme catalyses ATP + H2O + cellular proteinSide 1 = ADP + phosphate + cellular proteinSide 2.. Functionally, part of the Sec protein translocase complex. Interacts with the SecYEG preprotein conducting channel. Has a central role in coupling the hydrolysis of ATP to the transfer of proteins into and across the cell membrane, serving both as a receptor for the preprotein-SecB complex and as an ATP-driven molecular motor driving the stepwise translocation of polypeptide chains across the membrane. This is Protein translocase subunit SecA from Rhizorhabdus wittichii (strain DSM 6014 / CCUG 31198 / JCM 15750 / NBRC 105917 / EY 4224 / RW1) (Sphingomonas wittichii).